We begin with the raw amino-acid sequence, 839 residues long: Glycerol-3-phosphate acyltransferase (839 aa).

Residues 309-314 carry the HXXXXD motif motif; it reads CHRSHI.

This sequence belongs to the GPAT/DAPAT family.

The protein localises to the cell inner membrane. The enzyme catalyses sn-glycerol 3-phosphate + an acyl-CoA = a 1-acyl-sn-glycero-3-phosphate + CoA. Its pathway is phospholipid metabolism; CDP-diacylglycerol biosynthesis; CDP-diacylglycerol from sn-glycerol 3-phosphate: step 1/3. This chain is Glycerol-3-phosphate acyltransferase, found in Pseudomonas fluorescens (strain SBW25).